The following is a 448-amino-acid chain: Cysteine--tRNA ligase (448 aa).

Residue Cys-29 participates in Zn(2+) binding. Positions 31–41 match the 'HIGH' region motif; that stretch reads PTVYDTAHIGN. Over residues 79 to 91 the composition is skewed to basic and acidic residues; sequence ATTGADRGADQAH. The interval 79-106 is disordered; sequence ATTGADRGADQAHRGPLPRRHGPLNAAP. Residues Cys-206 and Glu-235 each contribute to the Zn(2+) site. Residues 265–269 carry the 'KMSKS' region motif; sequence RMSKS. Lys-268 provides a ligand contact to ATP.

Belongs to the class-I aminoacyl-tRNA synthetase family. As to quaternary structure, monomer. The cofactor is Zn(2+).

It is found in the cytoplasm. It carries out the reaction tRNA(Cys) + L-cysteine + ATP = L-cysteinyl-tRNA(Cys) + AMP + diphosphate. The protein is Cysteine--tRNA ligase (cysS) of Azospirillum brasilense.